Reading from the N-terminus, the 95-residue chain is Aspartyl/glutamyl-tRNA(Asn/Gln) amidotransferase subunit C (95 aa).

It belongs to the GatC family. In terms of assembly, heterotrimer of A, B and C subunits.

The catalysed reaction is L-glutamyl-tRNA(Gln) + L-glutamine + ATP + H2O = L-glutaminyl-tRNA(Gln) + L-glutamate + ADP + phosphate + H(+). It carries out the reaction L-aspartyl-tRNA(Asn) + L-glutamine + ATP + H2O = L-asparaginyl-tRNA(Asn) + L-glutamate + ADP + phosphate + 2 H(+). Functionally, allows the formation of correctly charged Asn-tRNA(Asn) or Gln-tRNA(Gln) through the transamidation of misacylated Asp-tRNA(Asn) or Glu-tRNA(Gln) in organisms which lack either or both of asparaginyl-tRNA or glutaminyl-tRNA synthetases. The reaction takes place in the presence of glutamine and ATP through an activated phospho-Asp-tRNA(Asn) or phospho-Glu-tRNA(Gln). The protein is Aspartyl/glutamyl-tRNA(Asn/Gln) amidotransferase subunit C of Chlorobaculum tepidum (strain ATCC 49652 / DSM 12025 / NBRC 103806 / TLS) (Chlorobium tepidum).